Consider the following 635-residue polypeptide: Threonine--tRNA ligase (635 aa).

The 58-residue stretch at 1 to 58 (MIRVICNNETVELPKGATAADFASKIKNSHYFAGVVINDQIKDLSTTLNEGDTLRFVT) folds into the TGS domain. Residues 237–528 (DHRVLGAKLD…LIEHFKGKFP (292 aa)) are catalytic. Zn(2+) contacts are provided by C328, H379, and H505.

Belongs to the class-II aminoacyl-tRNA synthetase family. Homodimer. Requires Zn(2+) as cofactor.

It is found in the cytoplasm. The catalysed reaction is tRNA(Thr) + L-threonine + ATP = L-threonyl-tRNA(Thr) + AMP + diphosphate + H(+). In terms of biological role, catalyzes the attachment of threonine to tRNA(Thr) in a two-step reaction: L-threonine is first activated by ATP to form Thr-AMP and then transferred to the acceptor end of tRNA(Thr). Also edits incorrectly charged L-seryl-tRNA(Thr). The protein is Threonine--tRNA ligase of Chlamydia caviae (strain ATCC VR-813 / DSM 19441 / 03DC25 / GPIC) (Chlamydophila caviae).